The sequence spans 256 residues: Deoxyribose-phosphate aldolase (256 aa).

The active-site Proton donor/acceptor is the D102. The active-site Schiff-base intermediate with acetaldehyde is the K165. K197 serves as the catalytic Proton donor/acceptor.

The protein belongs to the DeoC/FbaB aldolase family. DeoC type 2 subfamily.

Its subcellular location is the cytoplasm. It catalyses the reaction 2-deoxy-D-ribose 5-phosphate = D-glyceraldehyde 3-phosphate + acetaldehyde. The protein operates within carbohydrate degradation; 2-deoxy-D-ribose 1-phosphate degradation; D-glyceraldehyde 3-phosphate and acetaldehyde from 2-deoxy-alpha-D-ribose 1-phosphate: step 2/2. Catalyzes a reversible aldol reaction between acetaldehyde and D-glyceraldehyde 3-phosphate to generate 2-deoxy-D-ribose 5-phosphate. The chain is Deoxyribose-phosphate aldolase from Shewanella sp. (strain ANA-3).